Reading from the N-terminus, the 522-residue chain is Maturase K (522 aa).

This sequence belongs to the intron maturase 2 family. MatK subfamily.

The protein resides in the plastid. It is found in the chloroplast. In terms of biological role, usually encoded in the trnK tRNA gene intron. Probably assists in splicing its own and other chloroplast group II introns. This Iris domestica (Leopard lily) protein is Maturase K.